The following is a 400-amino-acid chain: Enoyl-[acyl-carrier-protein] reductase [NADH] (400 aa).

Residues 48–53, 74–75, 111–112, and 139–140 contribute to the NAD(+) site; these read GSSSGY, FE, DA, and LA. Tyr225 contacts substrate. Residue Tyr235 is the Proton donor of the active site. Residues Lys244 and 273 to 275 contribute to the NAD(+) site; that span reads VVT.

This sequence belongs to the TER reductase family. As to quaternary structure, monomer.

The catalysed reaction is a 2,3-saturated acyl-[ACP] + NAD(+) = a (2E)-enoyl-[ACP] + NADH + H(+). It functions in the pathway lipid metabolism; fatty acid biosynthesis. Functionally, involved in the final reduction of the elongation cycle of fatty acid synthesis (FAS II). Catalyzes the reduction of a carbon-carbon double bond in an enoyl moiety that is covalently linked to an acyl carrier protein (ACP). This chain is Enoyl-[acyl-carrier-protein] reductase [NADH], found in Shewanella baltica (strain OS185).